A 238-amino-acid chain; its full sequence is Probable transcriptional regulatory protein VV2_1184 (238 aa).

It belongs to the TACO1 family.

It localises to the cytoplasm. The chain is Probable transcriptional regulatory protein VV2_1184 from Vibrio vulnificus (strain CMCP6).